The primary structure comprises 107 residues: Nucleoid-associated protein NE0434 (107 aa).

Belongs to the YbaB/EbfC family. Homodimer.

The protein localises to the cytoplasm. Its subcellular location is the nucleoid. Binds to DNA and alters its conformation. May be involved in regulation of gene expression, nucleoid organization and DNA protection. This Nitrosomonas europaea (strain ATCC 19718 / CIP 103999 / KCTC 2705 / NBRC 14298) protein is Nucleoid-associated protein NE0434.